The sequence spans 215 residues: Ras-related protein Rab-14 (215 aa).

Position 2 is an N-acetylalanine (A2). The GTP site is built by G21, V22, G23, K24, S25, C26, A38, D39, C40, H42, and T43. S25 is a binding site for Mg(2+). The Switch 1 motif lies at 42-47 (HTIGVE). The Mg(2+) site is built by T43 and D66. Positions 68-77 (AGQERFRAVT) match the Switch 2 motif. The GTP site is built by G69, N124, K125, D127, A155, and K156. The interval 188–215 (SGVQHKPSAPQGGRLTSEPQPQREGCGC) is disordered. 2 S-geranylgeranyl cysteine lipidation sites follow: C213 and C215. C215 bears the Cysteine methyl ester mark.

This sequence belongs to the small GTPase superfamily. Rab family. Requires Mg(2+) as cofactor.

Its subcellular location is the recycling endosome. The protein resides in the early endosome membrane. It localises to the golgi apparatus membrane. The protein localises to the golgi apparatus. It is found in the trans-Golgi network membrane. Its subcellular location is the cytoplasmic vesicle. The protein resides in the phagosome. The enzyme catalyses GTP + H2O = GDP + phosphate + H(+). Regulated by guanine nucleotide exchange factors (GEFs) including DENND6A and DENND6B which promote the exchange of bound GDP for free GTP. Regulated by GTPase activating proteins (GAPs) which increase the GTP hydrolysis activity. Inhibited by GDP dissociation inhibitors (GDIs) which prevent Rab-GDP dissociation. Functionally, the small GTPases Rab are key regulators of intracellular membrane trafficking, from the formation of transport vesicles to their fusion with membranes. Rabs cycle between an inactive GDP-bound form and an active GTP-bound form that is able to recruit to membranes different set of downstream effectors directly responsible for vesicle formation, movement, tethering and fusion. Involved in membrane trafficking between the Golgi complex and endosomes during early embryonic development. Regulates the Golgi to endosome transport of FGFR-containing vesicles during early development, a key process for developing basement membrane and epiblast and primitive endoderm lineages during early postimplantation development. May act by modulating the kinesin KIF16B-cargo association to endosomes. Regulates, together with its guanine nucleotide exchange factor DENND6A, the specific endocytic transport of ADAM10, N-cadherin/CDH2 shedding and cell-cell adhesion. Mediates endosomal tethering and fusion through the interaction with RUFY1 and RAB4B. Interaction with RAB11FIP1 may function in the process of neurite formation. In Gallus gallus (Chicken), this protein is Ras-related protein Rab-14 (RAB14).